The chain runs to 340 residues: Sulfotransferase ppzF (340 aa).

Its pathway is secondary metabolite biosynthesis. In terms of biological role, sulfotransferase; part of the gene cluster that mediates the biosynthesis of pyrrolopyrazines, secondary metabolites showing insecticidal activity. The role of ppzF within the pathway has still to be determined. The single multifunctional NRPS ppzA is sufficient to produce peramine via condensation of 1-pyrroline-5-carboxylate and arginine, N-methylation of the alpha-amino group of arginine and reduction of the thioester and the cyclization to form an iminium ion resulting in release from the peptide synthetase. Deprotonation of this intermediate and oxidation of the pyrroline ring would give rise to peramine. In Epichloe species that produce only peramine, the peramine synthetase gene is not localized in a gene cluster, in contrast to Metarhizium species that contain additional pyrrolopyrazine biosynthesis genes. The 2-oxoglutarate-Fe(II) type oxidoreductase ppzC hydroxylates peramine to yield the newly identified compound 8-hydroxyperamine whereas ppzD converts L-proline into trans-4-hydroxy-L-proline, a precursor of peramine biosynthesis. This chain is Sulfotransferase ppzF, found in Metarhizium rileyi (strain RCEF 4871) (Nomuraea rileyi).